The following is a 148-amino-acid chain: Nucleoside diphosphate kinase (148 aa).

Residues Lys9, Phe57, Arg85, Thr91, Arg102, and Asn112 each contribute to the ATP site. The Pros-phosphohistidine intermediate role is filled by His115.

Belongs to the NDK family. As to quaternary structure, homotetramer. The cofactor is Mg(2+).

It localises to the cytoplasm. The catalysed reaction is a 2'-deoxyribonucleoside 5'-diphosphate + ATP = a 2'-deoxyribonucleoside 5'-triphosphate + ADP. It catalyses the reaction a ribonucleoside 5'-diphosphate + ATP = a ribonucleoside 5'-triphosphate + ADP. Functionally, major role in the synthesis of nucleoside triphosphates other than ATP. The ATP gamma phosphate is transferred to the NDP beta phosphate via a ping-pong mechanism, using a phosphorylated active-site intermediate. In Macrococcus caseolyticus (strain JCSC5402) (Macrococcoides caseolyticum), this protein is Nucleoside diphosphate kinase.